Here is a 645-residue protein sequence, read N- to C-terminus: Acetyl-coenzyme A synthetase (645 aa).

Residues 190–193 (RGSK), T308, and N332 each bind CoA. ATP is bound by residues 384–386 (GEP), 408–413 (DTWWQT), D497, and R512. S520 serves as a coordination point for CoA. R523 lines the ATP pocket. Mg(2+) is bound by residues V534, H536, and V539. R581 serves as a coordination point for CoA. K606 carries the post-translational modification N6-acetyllysine.

It belongs to the ATP-dependent AMP-binding enzyme family. Mg(2+) serves as cofactor. Acetylated. Deacetylation by the SIR2-homolog deacetylase activates the enzyme.

It carries out the reaction acetate + ATP + CoA = acetyl-CoA + AMP + diphosphate. Its function is as follows. Catalyzes the conversion of acetate into acetyl-CoA (AcCoA), an essential intermediate at the junction of anabolic and catabolic pathways. AcsA undergoes a two-step reaction. In the first half reaction, AcsA combines acetate with ATP to form acetyl-adenylate (AcAMP) intermediate. In the second half reaction, it can then transfer the acetyl group from AcAMP to the sulfhydryl group of CoA, forming the product AcCoA. In Bdellovibrio bacteriovorus (strain ATCC 15356 / DSM 50701 / NCIMB 9529 / HD100), this protein is Acetyl-coenzyme A synthetase.